A 53-amino-acid polypeptide reads, in one-letter code: uncharacterized protein (53 aa).

This is an uncharacterized protein from Dictyostelium discoideum (Social amoeba).